The sequence spans 168 residues: Myelin basic protein (168 aa).

A1 is subject to N-acetylalanine. S7 and S12 each carry phosphoserine. Residue Y14 is modified to Phosphotyrosine. Position 17 is a phosphothreonine (T17). The residue at position 19 (S19) is a Phosphoserine. Phosphothreonine is present on T20. 2 positions are modified to citrulline: R25 and R31. T35 bears the Phosphothreonine mark. The residue at position 40 (S40) is a Phosphoserine. The tract at residues 42–84 is disordered; the sequence is GRFFSSDRGAPKRGSGKDHAARTTHYGSLPQKSGHRPQDENPV. R43 and R49 each carry omega-N-methylarginine. The induces experimental autoimmune encephalomyelitis (EAE) stretch occupies residues 45-86; that stretch reads FSSDRGAPKRGSGKDHAARTTHYGSLPQKSGHRPQDENPVVH. S56 is subject to Phosphoserine. Position 65 is a phosphothreonine (T65). Residue Y67 is modified to Phosphotyrosine. S74 carries the post-translational modification Phosphoserine. Residues T93 and T96 each carry the phosphothreonine modification. Q101 is modified (deamidated glutamine; partial). Omega-N-methylarginine; alternate is present on R105. Position 105 is a symmetric dimethylarginine; alternate (R105). At S113 the chain carries Phosphoserine. At K120 the chain carries N6-acetyllysine. Citrulline is present on R128. At Q145 the chain carries Deamidated glutamine. R157 carries the post-translational modification Citrulline. A Phosphoserine modification is found at S159. Residue S163 is modified to Phosphoserine; by UHMK1. A Citrulline modification is found at R168.

It belongs to the myelin basic protein family. Homodimer. In terms of processing, as in other animals, several charge isomers may be produced as a result of optional post-translational modifications, such as phosphorylation of serine or threonine residues, deamidation of glutamine or asparagine residues, citrullination and methylation of arginine residues. Post-translationally, phosphorylated by TAOK2, VRK2, MAPK11, MAPK12, MAPK14 and MINK1. Proteolytically cleaved in B cell lysosomes by cathepsin CTSG which degrades the major immunogenic MBP epitope and prevents the activation of MBP-specific autoreactive T cells. In terms of tissue distribution, found in both the central and the peripheral nervous system.

It localises to the myelin membrane. In terms of biological role, is, with PLP, the most abundant protein component of the myelin membrane in the CNS. Has a role in both the formation and stabilization of this compact multilayer arrangement of bilayers. Each splice variant and charge isomer may have a specialized function in the assembly of an optimized, biochemically functional myelin membrane. The polypeptide is Myelin basic protein (MBP) (Oryctolagus cuniculus (Rabbit)).